The sequence spans 80 residues: UPF0180 protein BPUM_1317 (80 aa).

Belongs to the UPF0180 family.

This is UPF0180 protein BPUM_1317 from Bacillus pumilus (strain SAFR-032).